A 77-amino-acid polypeptide reads, in one-letter code: Large ribosomal subunit protein uL29 (77 aa).

It belongs to the universal ribosomal protein uL29 family.

In Mycobacterium avium (strain 104), this protein is Large ribosomal subunit protein uL29.